Consider the following 77-residue polypeptide: MSLFDFFKNKGSAATATDRLKLILAKERTLNLPYMEEMRKEIIAVIQKYTKSSDIHFKTLDSNQSVETIEVEIILPK.

Belongs to the MinE family.

Its function is as follows. Prevents the cell division inhibition by proteins MinC and MinD at internal division sites while permitting inhibition at polar sites. This ensures cell division at the proper site by restricting the formation of a division septum at the midpoint of the long axis of the cell. This is Cell division topological specificity factor from Helicobacter pylori (strain P12).